Consider the following 870-residue polypeptide: Disks large homolog 2 (870 aa).

S-palmitoyl cysteine attachment occurs at residues cysteine 5 and cysteine 7. Phosphoserine is present on serine 28. At tyrosine 58 the chain carries Phosphotyrosine. Serine 65 bears the Phosphoserine mark. PDZ domains follow at residues 98–184 and 193–279; these read EITL…VRRR and EIKL…VGKP. Phosphoserine occurs at positions 307, 328, 360, 365, 406, and 414. In terms of domain architecture, PDZ 3 spans 421 to 501; that stretch reads KVVLHKGSTG…QTVTIIAQYQ (81 aa). Phosphotyrosine is present on tyrosine 505. Residues serine 528, serine 530, serine 553, serine 627, and serine 635 each carry the phosphoserine modification. The SH3 domain maps to 536–606; sequence KRSLYVRAMF…PSKRRVERKE (71 aa). The Guanylate kinase-like domain maps to 680-855; sequence TRPVIILGPM…IYNQCKLVIE (176 aa). Tyrosine 750 and tyrosine 755 each carry phosphotyrosine.

This sequence belongs to the MAGUK family. As to quaternary structure, interacts through its PDZ domains with NETO1. Interacts with NOS1/nNOS through second PDZ domain. Interacts with KCNJ2/Kir2.1 (via C-terminus) through one of its PDZ domains. Interacts with KCNJ4, Interacts with FRMPD4 (via C-terminus). Interacts with LRFN1, LRFN2 and LRFN4. Interacts with FASLG. Interacts with KCNJ4. Interacts with ADAM22. Interacts with DGKI (via PDZ-binding motif). In terms of processing, palmitoylation of isoform 1 is not required for targeting to postsynaptic density.

It localises to the cell membrane. The protein localises to the postsynaptic density. It is found in the synapse. Its subcellular location is the membrane. The protein resides in the cell projection. It localises to the axon. The protein localises to the perikaryon. Functionally, required for perception of chronic pain through NMDA receptor signaling. Regulates surface expression of NMDA receptors in dorsal horn neurons of the spinal cord. Interacts with the cytoplasmic tail of NMDA receptor subunits as well as inward rectifying potassium channels. Involved in regulation of synaptic stability at cholinergic synapses. Part of the postsynaptic protein scaffold of excitatory synapses. This chain is Disks large homolog 2 (DLG2), found in Homo sapiens (Human).